The sequence spans 528 residues: Autophagy-related protein 22 (528 aa).

At Met1–Leu98 the chain is on the cytoplasmic side. The chain crosses the membrane as a helical span at residues Tyr99 to Val119. At Asp120 to Arg130 the chain is on the vacuolar side. Residues Ile131–Asp151 form a helical membrane-spanning segment. Residues Thr152–Gln153 lie on the Cytoplasmic side of the membrane. A helical transmembrane segment spans residues Ile154–Val174. Topologically, residues Gly175–Arg210 are vacuolar. A helical membrane pass occupies residues Gly211 to Ala231. Over Ser232 to Gln241 the chain is Cytoplasmic. Residues Val242–Ile262 traverse the membrane as a helical segment. At Asp263 to Asp318 the chain is on the vacuolar side. Position 278 is a phosphoserine (Ser278). A helical membrane pass occupies residues Val319–Thr339. The Cytoplasmic segment spans residues Ala340 to Thr352. The helical transmembrane segment at Leu353–Ile373 threads the bilayer. The Vacuolar portion of the chain corresponds to Pro374–Thr388. Residues Leu389–Phe409 traverse the membrane as a helical segment. The Cytoplasmic portion of the chain corresponds to Asn410–Lys417. The helical transmembrane segment at Phe418 to Ser438 threads the bilayer. The Vacuolar portion of the chain corresponds to Arg439–Tyr485. Residues Ser486–Val506 traverse the membrane as a helical segment. At Lys507 to Asp528 the chain is on the cytoplasmic side.

The protein belongs to the ATG22 family.

It localises to the vacuole membrane. Vacuolar effluxer which mediate the efflux of leucine and other amino acids resulting from autophagic degradation. The release of autophagic amino acids allows the maintenance of protein synthesis and viability during nitrogen starvation. The polypeptide is Autophagy-related protein 22 (ATG22) (Saccharomyces cerevisiae (strain ATCC 204508 / S288c) (Baker's yeast)).